A 293-amino-acid chain; its full sequence is Oxidoreductase R2 (293 aa).

Belongs to the asaB hydroxylase/desaturase family.

The protein operates within secondary metabolite biosynthesis. Its function is as follows. Oxidoreductase; part of the gene cluster that mediates the biosynthesis of squalestatin S1 (SQS1, also known as zaragozic acid A), a heavily oxidized fungal polyketide that offers potent cholesterol lowering activity by targeting squalene synthase (SS). SQS1 is composed of a 2,8-dioxobicyclic[3.2.1]octane-3,4,5-tricarboxyclic acid core that is connected to two lipophilic polyketide arms. These initial steps feature the priming of an unusual benzoic acid starter unit onto the highly reducing polyketide synthase pks2, followed by oxaloacetate extension and product release to generate a tricarboxylic acid containing product. The phenylalanine ammonia lyase (PAL) M7 and the acyl-CoA ligase M9 are involved in transforming phenylalanine into benzoyl-CoA. The citrate synthase-like protein R3 is involved in connecting the C-alpha-carbons of the hexaketide chain and oxaloacetate to afford the tricarboxylic acid unit. The potential hydrolytic enzymes, M8 and M10, are in close proximity to pks2 and may participate in product release. On the other side, the tetraketide arm is synthesized by a the squalestatin tetraketide synthase pks1 and enzymatically esterified to the core in the last biosynthetic step, by the acetyltransferase M4. The biosynthesis of the tetraketide must involve 3 rounds of chain extension. After the first and second rounds methyl-transfer occurs, and in all rounds of extension the ketoreductase and dehydratase are active. The enoyl reductase and C-MeT of pks1 are not active in the final round of extension. The acetyltransferase M4 appears to have a broad substrate selectivity for its acyl CoA substrate, allowing the in vitro synthesis of novel squalestatins. The biosynthesis of SQS1 requires several oxidative steps likely performed by oxidoreductases M1, R1 and R2. Finally, in support of the identification of the cluster as being responsible for SQS1 production, the cluster contains a gene encoding a putative squalene synthase (SS) R6, suggesting a likely mechanism for self-resistance. The polypeptide is Oxidoreductase R2 (Phoma sp. (strain ATCC 20986 / MF5453)).